A 518-amino-acid chain; its full sequence is Maturase K (518 aa).

The protein belongs to the intron maturase 2 family. MatK subfamily.

The protein resides in the plastid. It localises to the chloroplast. Functionally, usually encoded in the trnK tRNA gene intron. Probably assists in splicing its own and other chloroplast group II introns. This is Maturase K from Syzygium cumini (Java plum).